The chain runs to 77 residues: UPF0337 protein CE0198 (77 aa).

A disordered region spans residues 1–77 (MGDLSNKAEG…PDVEHPEAVN (77 aa)). Composition is skewed to basic and acidic residues over residues 30–56 (DEGR…KDGA) and 64–77 (QDKD…EAVN).

Belongs to the UPF0337 (CsbD) family.

This chain is UPF0337 protein CE0198, found in Corynebacterium efficiens (strain DSM 44549 / YS-314 / AJ 12310 / JCM 11189 / NBRC 100395).